The chain runs to 548 residues: Chaperonin GroEL (548 aa).

ATP is bound by residues 30–33, Lys-51, 87–91, Gly-415, 479–481, and Asp-495; these read TLGP, DGTTT, and NAA.

The protein belongs to the chaperonin (HSP60) family. In terms of assembly, forms a cylinder of 14 subunits composed of two heptameric rings stacked back-to-back. Interacts with the co-chaperonin GroES.

It localises to the cytoplasm. It catalyses the reaction ATP + H2O + a folded polypeptide = ADP + phosphate + an unfolded polypeptide.. Functionally, together with its co-chaperonin GroES, plays an essential role in assisting protein folding. The GroEL-GroES system forms a nano-cage that allows encapsulation of the non-native substrate proteins and provides a physical environment optimized to promote and accelerate protein folding. The sequence is that of Chaperonin GroEL from Oleidesulfovibrio alaskensis (strain ATCC BAA-1058 / DSM 17464 / G20) (Desulfovibrio alaskensis).